We begin with the raw amino-acid sequence, 247 residues long: Ubiquinone biosynthesis O-methyltransferase (247 aa).

S-adenosyl-L-methionine-binding residues include arginine 39, glycine 70, aspartate 91, and methionine 134.

This sequence belongs to the methyltransferase superfamily. UbiG/COQ3 family.

The enzyme catalyses a 3-demethylubiquinol + S-adenosyl-L-methionine = a ubiquinol + S-adenosyl-L-homocysteine + H(+). It catalyses the reaction a 3-(all-trans-polyprenyl)benzene-1,2-diol + S-adenosyl-L-methionine = a 2-methoxy-6-(all-trans-polyprenyl)phenol + S-adenosyl-L-homocysteine + H(+). It functions in the pathway cofactor biosynthesis; ubiquinone biosynthesis. In terms of biological role, O-methyltransferase that catalyzes the 2 O-methylation steps in the ubiquinone biosynthetic pathway. This is Ubiquinone biosynthesis O-methyltransferase from Cereibacter sphaeroides (strain ATCC 17023 / DSM 158 / JCM 6121 / CCUG 31486 / LMG 2827 / NBRC 12203 / NCIMB 8253 / ATH 2.4.1.) (Rhodobacter sphaeroides).